A 329-amino-acid chain; its full sequence is Probable quinone oxidoreductase (329 aa).

S191 is modified (phosphoserine).

The protein belongs to the zinc-containing alcohol dehydrogenase family. Quinone oxidoreductase subfamily.

Its subcellular location is the cytoplasm. It localises to the nucleus. It carries out the reaction 2 a quinone + NADPH + H(+) = 2 a 1,4-benzosemiquinone + NADP(+). The sequence is that of Probable quinone oxidoreductase (zta1) from Schizosaccharomyces pombe (strain 972 / ATCC 24843) (Fission yeast).